Here is a 92-residue protein sequence, read N- to C-terminus: MSEEKKVVLTREYVVNLRRAYEVSRTKRAKYAVGLIRRFVARHLKVESKNVRIGQALNEVLWMRSIEKPPRKVRVVVEKLSDGTVKVDLKNV.

This sequence belongs to the eukaryotic ribosomal protein eL31 family.

The sequence is that of Large ribosomal subunit protein eL31 from Pyrobaculum arsenaticum (strain DSM 13514 / JCM 11321 / PZ6).